The primary structure comprises 319 residues: Formimidoylglutamase (319 aa).

Mn(2+)-binding residues include His-131, Asp-154, His-156, Asp-158, Cys-248, and Asp-250.

The protein belongs to the arginase family. Mn(2+) serves as cofactor.

It catalyses the reaction N-formimidoyl-L-glutamate + H2O = formamide + L-glutamate. It participates in amino-acid degradation; L-histidine degradation into L-glutamate; L-glutamate from N-formimidoyl-L-glutamate (hydrolase route): step 1/1. Functionally, catalyzes the conversion of N-formimidoyl-L-glutamate to L-glutamate and formamide. In Legionella pneumophila subsp. pneumophila (strain Philadelphia 1 / ATCC 33152 / DSM 7513), this protein is Formimidoylglutamase.